The following is a 318-amino-acid chain: Olfactory receptor 52D1 (318 aa).

Topologically, residues 1-28 (MSDSNLSDNHLPDTFFLTGIPGLEAAHF) are extracellular. A glycan (N-linked (GlcNAc...) asparagine) is linked at asparagine 5. The helical transmembrane segment at 29-49 (WIAIPFCAMYLVALVGNAALI) threads the bilayer. Residues 50–57 (LVIAMDNA) lie on the Cytoplasmic side of the membrane. The chain crosses the membrane as a helical span at residues 58 to 78 (LHAPMYLFLCLLSLTDLALSS). At 79 to 102 (TTVPKMLAILWLHAGEISFGGCLA) the chain is on the extracellular side. Cysteine 100 and cysteine 192 are joined by a disulfide. A helical membrane pass occupies residues 103 to 123 (QMFCVHSIYALESSILLAMAF). Over 124-142 (DRYVAICNPLRYTTILNHA) the chain is Cytoplasmic. A helical transmembrane segment spans residues 143–163 (VIGRIGFVGLFRSVAIVSPFI). Topologically, residues 164–199 (FLLRRLPYCGHRVMTHTYCEHMGIARLACANITVNI) are extracellular. A helical transmembrane segment spans residues 200-220 (VYGLTVALLAMGLDSILIAIS). At 221 to 240 (YGFILHAVFHLPSHDAQHKA) the chain is on the cytoplasmic side. A helical membrane pass occupies residues 241–261 (LSTCGSHIGIILVFYIPAFFS). At 262–277 (FLTHRFGHHEVPKHVH) the chain is on the extracellular side. A helical transmembrane segment spans residues 278-298 (IFLANLYVLVPPVLNPILYGA). At 299–318 (RTKEIRSRLLKLLHLGKTSI) the chain is on the cytoplasmic side.

This sequence belongs to the G-protein coupled receptor 1 family.

Its subcellular location is the cell membrane. Functionally, odorant receptor. This Homo sapiens (Human) protein is Olfactory receptor 52D1 (OR52D1).